A 71-amino-acid chain; its full sequence is uncharacterized protein (71 aa).

A helical transmembrane segment spans residues 12–34; the sequence is YLYNYFSSTTSWLVFIILSLDTI.

The protein localises to the membrane. This is an uncharacterized protein from Schizosaccharomyces pombe (strain 972 / ATCC 24843) (Fission yeast).